The sequence spans 115 residues: Large ribosomal subunit protein bL19 (115 aa).

This sequence belongs to the bacterial ribosomal protein bL19 family.

This protein is located at the 30S-50S ribosomal subunit interface and may play a role in the structure and function of the aminoacyl-tRNA binding site. The polypeptide is Large ribosomal subunit protein bL19 (Syntrophotalea carbinolica (strain DSM 2380 / NBRC 103641 / GraBd1) (Pelobacter carbinolicus)).